Consider the following 263-residue polypeptide: Phosphonates import ATP-binding protein PhnC 1 (263 aa).

Positions isoleucine 3 to lysine 248 constitute an ABC transporter domain. Residue glycine 37–serine 44 participates in ATP binding.

This sequence belongs to the ABC transporter superfamily. Phosphonates importer (TC 3.A.1.9.1) family. In terms of assembly, the complex is composed of two ATP-binding proteins (PhnC), two transmembrane proteins (PhnE) and a solute-binding protein (PhnD).

The protein localises to the cell inner membrane. The enzyme catalyses phosphonate(out) + ATP + H2O = phosphonate(in) + ADP + phosphate + H(+). Part of the ABC transporter complex PhnCDE involved in phosphonates import. Responsible for energy coupling to the transport system. The protein is Phosphonates import ATP-binding protein PhnC 1 of Synechococcus sp. (strain JA-2-3B'a(2-13)) (Cyanobacteria bacterium Yellowstone B-Prime).